The primary structure comprises 116 residues: MIRCLRLKVEGALEQIFTMAGLNIRDLLRDILIRWRDENYLGMVEGAGMFIEEIHPEGFSLYVHLDVRAVCLLEAIVQHLTNAIICSLAVEFDHATGGERVHLIDLHFEVLDNLLE.

It belongs to the adenoviridae E4 ORF3 family. In terms of assembly, homodimer. Multimerizes through C-terminus tail by reciprocal or nonreciprocal interactions. Interacts with host PML isoform 2 C-terminal disordered region. Interacts with E1B-55k; this interaction is necessary for E1B 55 kDa protein to localize to the nuclear matrix fraction of the cell. May interact with host TRIM24, CREBBP, EP300, PRKDC and the MRN complex MRE11/RAD50/NBS1; these interactions may happen through nuclear bodies complexes.

Its subcellular location is the host nucleus. Functionally, forms a multivalent network in host nucleus that inhibits nuclear bodies and prevents antiviral cellular activities. The network is made of multimerized dimers and surrounds adenovirus replication centers and nucleolus. Plays a role in splicing of the major late transcript. Prevents viral genome concatemer formation. The protein is Early 4 ORF3 protein of Human adenovirus C serotype 2 (HAdV-2).